The primary structure comprises 256 residues: uncharacterized protein (256 aa).

An HTH cro/C1-type domain is found at I10 to Y64. Positions L21–R40 form a DNA-binding region, H-T-H motif.

This is an uncharacterized protein from Mycobacterium bovis (strain ATCC BAA-935 / AF2122/97).